Here is a 529-residue protein sequence, read N- to C-terminus: Type I inositol polyphosphate 5-phosphatase 5 (529 aa).

Catalytic stretches follow at residues Asp371–Thr386 and Lys451–Glu466.

Belongs to the inositol polyphosphate 5-phosphatase family.

May be involved in the regulation of root hairs development. Required for restricting both the size of the root-hair initiation site and the width of the root hairs during the transition to tip growth, but is not required for normal subsequent tip growth. The sequence is that of Type I inositol polyphosphate 5-phosphatase 5 from Arabidopsis thaliana (Mouse-ear cress).